We begin with the raw amino-acid sequence, 344 residues long: N-acetyl-gamma-glutamyl-phosphate reductase 1 (344 aa).

The active site involves Cys-150.

This sequence belongs to the NAGSA dehydrogenase family. Type 1 subfamily.

The protein resides in the cytoplasm. The catalysed reaction is N-acetyl-L-glutamate 5-semialdehyde + phosphate + NADP(+) = N-acetyl-L-glutamyl 5-phosphate + NADPH + H(+). The protein operates within amino-acid biosynthesis; L-arginine biosynthesis; N(2)-acetyl-L-ornithine from L-glutamate: step 3/4. In terms of biological role, catalyzes the NADPH-dependent reduction of N-acetyl-5-glutamyl phosphate to yield N-acetyl-L-glutamate 5-semialdehyde. The sequence is that of N-acetyl-gamma-glutamyl-phosphate reductase 1 from Pseudomonas putida (strain ATCC 47054 / DSM 6125 / CFBP 8728 / NCIMB 11950 / KT2440).